Here is a 181-residue protein sequence, read N- to C-terminus: Malignant T-cell-amplified sequence 1-B (181 aa).

The PUA domain maps to 92–171 (LPHQQVDKGA…IGIENIHYLN (80 aa)).

This sequence belongs to the MCTS1 family.

The protein resides in the cytoplasm. Functionally, plays a role as translation enhancer and involved in cell cycle regulation. The sequence is that of Malignant T-cell-amplified sequence 1-B (mcts1-b) from Xenopus laevis (African clawed frog).